The primary structure comprises 515 residues: Putative cytochrome P450 CYP13A2 (515 aa).

Cys-460 is a heme binding site.

The protein belongs to the cytochrome P450 family. Heme is required as a cofactor.

Its function is as follows. Cytochromes P450 are a group of heme-thiolate monooxygenases. They oxidize a variety of structurally unrelated compounds, including steroids, fatty acids, and xenobiotics. The polypeptide is Putative cytochrome P450 CYP13A2 (cyp-13A2) (Caenorhabditis elegans).